A 55-amino-acid polypeptide reads, in one-letter code: Large ribosomal subunit protein bL33A (55 aa).

It belongs to the bacterial ribosomal protein bL33 family.

The protein is Large ribosomal subunit protein bL33A of Mycobacterium sp. (strain JLS).